Here is a 69-residue protein sequence, read N- to C-terminus: NADH dehydrogenase [ubiquinone] 1 beta subcomplex subunit 2 (69 aa).

Belongs to the complex I NDUFB2 subunit family. In terms of assembly, complex I is composed of at least 49 different subunits.

Its subcellular location is the mitochondrion inner membrane. Its function is as follows. Accessory subunit of the mitochondrial membrane respiratory chain NADH dehydrogenase (Complex I), that is believed not to be involved in catalysis. Complex I functions in the transfer of electrons from NADH to the respiratory chain. The immediate electron acceptor for the enzyme is believed to be ubiquinone. This Arabidopsis thaliana (Mouse-ear cress) protein is NADH dehydrogenase [ubiquinone] 1 beta subcomplex subunit 2.